Consider the following 1069-residue polypeptide: Cellulose synthase A catalytic subunit 5 [UDP-forming] (1069 aa).

Residue Met-1 is modified to N-acetylmethionine. Residues 1 to 265 lie on the Cytoplasmic side of the membrane; the sequence is MNTGGRLIAG…KSSKINPYRM (265 aa). Positions 39, 42, 58, 61, 66, 69, 81, and 84 each coordinate Zn(2+). The segment at 39-85 adopts an RING-type; degenerate zinc-finger fold; the sequence is CQICGDEIELSVDGESFVACNECAFPVCRPCYEYERREGNQSCPQCK. 2 positions are modified to phosphoserine: Ser-229 and Ser-230. The helical transmembrane segment at 266-286 threads the bilayer; sequence LIVLRLVILGLFFHYRILHPV. Over 287-288 the chain is Extracellular; sequence ND. A helical membrane pass occupies residues 289 to 309; that stretch reads AYALWLISVICEIWFAVSWVL. Topologically, residues 310–853 are cytoplasmic; it reads DQFPKWYPIE…INSVVYPWTS (544 aa). Positions 348, 354, 355, and 384 each coordinate UDP-alpha-D-glucose. The active site involves Asp-384. Residues 438 to 464 adopt a coiled-coil conformation; the sequence is VRERRAMKRDYEEFKVKINALVATAQK. Residue Lys-525 coordinates UDP-alpha-D-glucose. Mn(2+) is bound by residues Lys-526 and Asp-550. The active site involves Asp-770. The chain crosses the membrane as a helical span at residues 854–874; the sequence is IPLLVYCSLPAICLLTGKFIV. Residues 875 to 879 lie on the Extracellular side of the membrane; the sequence is PEISN. The helical transmembrane segment at 880 to 900 threads the bilayer; it reads YASILFMALFGSIAVTGILEM. Residues 901–915 are Cytoplasmic-facing; that stretch reads QWGKVGIDDWWRNEQ. The chain crosses the membrane as a helical span at residues 916-936; the sequence is FWVIGGVSAHLFALFQGLLKV. The Extracellular segment spans residues 937–965; it reads LAGVETNFTVTSKAADDGEFSELYIFKWT. Asn-943 is a glycosylation site (N-linked (GlcNAc...) asparagine). A helical membrane pass occupies residues 966–986; it reads SLLIPPTTLLIINVIGVIVGI. Topologically, residues 987–997 are cytoplasmic; it reads SDAISNGYDSW. A helical transmembrane segment spans residues 998-1018; that stretch reads GPLFGRLFFAFWVILHLYPFL. Residues 1019–1027 lie on the Extracellular side of the membrane; it reads KGLLGKQDR. The helical transmembrane segment at 1028–1048 threads the bilayer; the sequence is MPTIILVWSILLASILTLLWV. At 1049 to 1069 the chain is on the cytoplasmic side; the sequence is RVNPFVAKGGPILEICGLDCL.

The protein belongs to the glycosyltransferase 2 family. Plant cellulose synthase subfamily. Zn(2+) serves as cofactor. It depends on Mn(2+) as a cofactor. Expressed in young plants, stems and flowers.

The protein resides in the cell membrane. The enzyme catalyses [(1-&gt;4)-beta-D-glucosyl](n) + UDP-alpha-D-glucose = [(1-&gt;4)-beta-D-glucosyl](n+1) + UDP + H(+). It functions in the pathway glycan metabolism; plant cellulose biosynthesis. In terms of biological role, catalytic subunit of cellulose synthase terminal complexes ('rosettes'), required for beta-1,4-glucan microfibril crystallization, a major mechanism of the cell wall formation. The chain is Cellulose synthase A catalytic subunit 5 [UDP-forming] from Arabidopsis thaliana (Mouse-ear cress).